The primary structure comprises 289 residues: Elongation factor Ts (289 aa).

The segment at 80 to 83 (TDFV) is involved in Mg(2+) ion dislocation from EF-Tu.

The protein belongs to the EF-Ts family.

The protein resides in the cytoplasm. In terms of biological role, associates with the EF-Tu.GDP complex and induces the exchange of GDP to GTP. It remains bound to the aminoacyl-tRNA.EF-Tu.GTP complex up to the GTP hydrolysis stage on the ribosome. This Francisella tularensis subsp. holarctica (strain LVS) protein is Elongation factor Ts.